Consider the following 60-residue polypeptide: Large ribosomal subunit protein bL32 (60 aa).

The disordered stretch occupies residues 1-36 (MAVQQNKKSPSKRGMHRSHNALNTPGLAIEPTTGET). Residues 9–19 (SPSKRGMHRSH) show a composition bias toward basic residues.

It belongs to the bacterial ribosomal protein bL32 family.

This is Large ribosomal subunit protein bL32 from Methylibium petroleiphilum (strain ATCC BAA-1232 / LMG 22953 / PM1).